Here is a 578-residue protein sequence, read N- to C-terminus: Protein O-linked-mannose beta-1,4-N-acetylglucosaminyltransferase 2 (578 aa).

Residues Met1–Pro4 are Cytoplasmic-facing. Residues Ala5 to Leu25 traverse the membrane as a helical; Signal-anchor for type II membrane protein segment. Over Val26–Thr578 the chain is Lumenal. 3 N-linked (GlcNAc...) asparagine glycosylation sites follow: Asn98, Asn275, and Asn541. The 97-residue stretch at Arg482–Thr578 folds into the Fibronectin type-III domain.

This sequence belongs to the glycosyltransferase 61 family.

It is found in the endoplasmic reticulum membrane. It carries out the reaction 3-O-(alpha-D-mannosyl)-L-threonyl-[protein] + UDP-N-acetyl-alpha-D-glucosamine = 3-O-(N-acetyl-beta-D-glucosaminyl-(1-&gt;4)-alpha-D-mannosyl)-L-threonyl-[protein] + UDP + H(+). It functions in the pathway protein modification; protein glycosylation. Its function is as follows. O-linked mannose beta-1,4-N-acetylglucosaminyltransferase that transfers UDP-N-acetyl-D-glucosamine to the 4-position of the mannose to generate N-acetyl-D-glucosamine-beta-1,4-O-D-mannosylprotein. Involved in the biosynthesis of the phosphorylated O-mannosyl trisaccharide (N-acetylgalactosamine-beta-3-N-acetylglucosamine-beta-4-(phosphate-6-)mannose), a carbohydrate structure present in alpha-dystroglycan (DAG1), which is required for binding laminin G-like domain-containing extracellular proteins with high affinity. This chain is Protein O-linked-mannose beta-1,4-N-acetylglucosaminyltransferase 2 (pomgnt2), found in Danio rerio (Zebrafish).